The sequence spans 364 residues: Serpentine receptor class epsilon-27 (364 aa).

7 consecutive transmembrane segments (helical) span residues 31 to 51, 64 to 84, 125 to 145, 167 to 187, 195 to 215, 257 to 277, and 290 to 310; these read VIAS…VVSL, FIIL…GKLI, LLII…FGAV, IFIP…CSCL, IITI…VFFL, LIFS…TLLL, and NALF…IPAW.

The protein belongs to the nematode receptor-like protein sre family.

The protein localises to the membrane. This is Serpentine receptor class epsilon-27 (sre-27) from Caenorhabditis elegans.